A 141-amino-acid chain; its full sequence is Flagellar assembly factor FliW (141 aa).

This sequence belongs to the FliW family. Interacts with translational regulator CsrA and flagellin(s).

It is found in the cytoplasm. Acts as an anti-CsrA protein, binds CsrA and prevents it from repressing translation of its target genes, one of which is flagellin. Binds to flagellin and participates in the assembly of the flagellum. In Clostridium acetobutylicum (strain ATCC 824 / DSM 792 / JCM 1419 / IAM 19013 / LMG 5710 / NBRC 13948 / NRRL B-527 / VKM B-1787 / 2291 / W), this protein is Flagellar assembly factor FliW.